We begin with the raw amino-acid sequence, 91 residues long: uncharacterized protein (91 aa).

Residues 50 to 70 form a helical membrane-spanning segment; sequence FGFFGGPFIGGLAGGLIGSAL.

Its subcellular location is the cell membrane. This is an uncharacterized protein from Bacillus subtilis (strain 168).